The chain runs to 239 residues: Norbelladine 4'-O-methyltransferase 5 (239 aa).

Residues valine 55, glutamate 77, 79-80 (GV), serine 85, aspartate 103, and alanine 132 each bind S-adenosyl-L-methionine. Aspartate 155 serves as a coordination point for a divalent metal cation. Aspartate 157 lines the S-adenosyl-L-methionine pocket. A divalent metal cation is bound by residues aspartate 181 and asparagine 182.

The protein belongs to the class I-like SAM-binding methyltransferase superfamily. Cation-dependent O-methyltransferase family. It depends on Mg(2+) as a cofactor.

The enzyme catalyses norbelladine + S-adenosyl-L-methionine = 4'-O-methylnorbelladine + S-adenosyl-L-homocysteine + H(+). It functions in the pathway alkaloid biosynthesis. Functionally, 4'-O-methyltransferase converting norbelladine to 4'-O-methylnorbelladine. 4'-O-methylnorbelladine is a precursor to all Amaryllidaceae alkaloids such as galanthamine, lycorine and haemanthamine, and including haemanthamine- and crinamine-type alkaloids, promising anticancer agents. The sequence is that of Norbelladine 4'-O-methyltransferase 5 from Narcissus aff. pseudonarcissus MK-2014 (Daffodil).